We begin with the raw amino-acid sequence, 562 residues long: Arginine--tRNA ligase (562 aa).

Residues 129 to 139 carry the 'HIGH' region motif; the sequence is ANPTGPLHVGH.

It belongs to the class-I aminoacyl-tRNA synthetase family. As to quaternary structure, monomer.

It localises to the cytoplasm. It carries out the reaction tRNA(Arg) + L-arginine + ATP = L-arginyl-tRNA(Arg) + AMP + diphosphate. The chain is Arginine--tRNA ligase from Xylella fastidiosa (strain M12).